Consider the following 281-residue polypeptide: MAIKKYKSTTNGRRNMTTIDYSAVLTTKNTPEKSLVVSKSSKAGRNNRGLITTRHKGGGHKQKYRIIDFKRNKRDIFGTISTIEYDPNRNAFICLVNYVDGEKRYILFAKGMQVGMKVVASENADIKVGNSAPLKNIPEGTLLHNVELKPGKGGQIARSAGSSVQLLGKDDDGRYVTLRLSSGEVRKVLSECYATIGEVGNEEYNLVNWGKAGRNRWRGIRPTVRGSVMNPNDHPHGGGEGRAPIGRKSPVTPWGKKALGVKTRNTKKASEKLIVRKRSKK.

Residues Thr-223–Gly-255 form a disordered region.

It belongs to the universal ribosomal protein uL2 family. In terms of assembly, part of the 50S ribosomal subunit. Forms a bridge to the 30S subunit in the 70S ribosome.

Its function is as follows. One of the primary rRNA binding proteins. Required for association of the 30S and 50S subunits to form the 70S ribosome, for tRNA binding and peptide bond formation. It has been suggested to have peptidyltransferase activity; this is somewhat controversial. Makes several contacts with the 16S rRNA in the 70S ribosome. The chain is Large ribosomal subunit protein uL2 from Mycoplasma capricolum subsp. capricolum (strain California kid / ATCC 27343 / NCTC 10154).